The chain runs to 494 residues: Guanosine-5'-triphosphate,3'-diphosphate pyrophosphatase (494 aa).

This sequence belongs to the GppA/Ppx family. GppA subfamily.

The enzyme catalyses guanosine 3'-diphosphate 5'-triphosphate + H2O = guanosine 3',5'-bis(diphosphate) + phosphate + H(+). The protein operates within purine metabolism; ppGpp biosynthesis; ppGpp from GTP: step 2/2. In terms of biological role, catalyzes the conversion of pppGpp to ppGpp. Guanosine pentaphosphate (pppGpp) is a cytoplasmic signaling molecule which together with ppGpp controls the 'stringent response', an adaptive process that allows bacteria to respond to amino acid starvation, resulting in the coordinated regulation of numerous cellular activities. This is Guanosine-5'-triphosphate,3'-diphosphate pyrophosphatase from Escherichia coli O6:H1 (strain CFT073 / ATCC 700928 / UPEC).